The chain runs to 141 residues: Large ribosomal subunit protein uL16 (141 aa).

Belongs to the universal ribosomal protein uL16 family. In terms of assembly, part of the 50S ribosomal subunit.

In terms of biological role, binds 23S rRNA and is also seen to make contacts with the A and possibly P site tRNAs. This is Large ribosomal subunit protein uL16 from Nostoc punctiforme (strain ATCC 29133 / PCC 73102).